We begin with the raw amino-acid sequence, 445 residues long: tRNA-2-methylthio-N(6)-dimethylallyladenosine synthase (445 aa).

Residues 3–120 (RKLFIQTHGC…LPGLITQAAS (118 aa)) enclose the MTTase N-terminal domain. Positions 12, 49, 83, 157, 161, and 164 each coordinate [4Fe-4S] cluster. The region spanning 143–375 (SVDGPSAFVS…QQRINQNVQD (233 aa)) is the Radical SAM core domain. One can recognise a TRAM domain in the interval 378-442 (RKMVGSTQRI…SNSLLGTDPR (65 aa)).

It belongs to the methylthiotransferase family. MiaB subfamily. In terms of assembly, monomer. The cofactor is [4Fe-4S] cluster.

The protein resides in the cytoplasm. It catalyses the reaction N(6)-dimethylallyladenosine(37) in tRNA + (sulfur carrier)-SH + AH2 + 2 S-adenosyl-L-methionine = 2-methylsulfanyl-N(6)-dimethylallyladenosine(37) in tRNA + (sulfur carrier)-H + 5'-deoxyadenosine + L-methionine + A + S-adenosyl-L-homocysteine + 2 H(+). Catalyzes the methylthiolation of N6-(dimethylallyl)adenosine (i(6)A), leading to the formation of 2-methylthio-N6-(dimethylallyl)adenosine (ms(2)i(6)A) at position 37 in tRNAs that read codons beginning with uridine. The sequence is that of tRNA-2-methylthio-N(6)-dimethylallyladenosine synthase from Alcanivorax borkumensis (strain ATCC 700651 / DSM 11573 / NCIMB 13689 / SK2).